A 463-amino-acid polypeptide reads, in one-letter code: Argininosuccinate lyase (463 aa).

Belongs to the lyase 1 family. Argininosuccinate lyase subfamily.

It localises to the cytoplasm. The catalysed reaction is 2-(N(omega)-L-arginino)succinate = fumarate + L-arginine. It functions in the pathway amino-acid biosynthesis; L-arginine biosynthesis; L-arginine from L-ornithine and carbamoyl phosphate: step 3/3. The polypeptide is Argininosuccinate lyase (Bradyrhizobium sp. (strain BTAi1 / ATCC BAA-1182)).